Here is a 111-residue protein sequence, read N- to C-terminus: Resistin-like alpha (111 aa).

The first 23 residues, 1–23 (MKTATCSLLICVFLLQLMVPVNT), serve as a signal peptide directing secretion. Intrachain disulfides connect C55–C108, C67–C107, C76–C93, C78–C95, and C82–C97.

This sequence belongs to the resistin/FIZZ family. Monomer. As to expression, highest levels in adipose tissue.

The protein resides in the secreted. In terms of biological role, probable hormone. Plays a role in pulmonary vascular remodeling. This Rattus norvegicus (Rat) protein is Resistin-like alpha (Retnla).